A 539-amino-acid polypeptide reads, in one-letter code: GMP synthase [glutamine-hydrolyzing] (539 aa).

Residues 4-202 (KILILDFGSQ…VLQIAGAKPD (199 aa)) form the Glutamine amidotransferase type-1 domain. Residue cysteine 81 is the Nucleophile of the active site. Active-site residues include histidine 176 and glutamate 178. Residues 203-395 (WIMSNHIEEA…LGLPPEMVYR (193 aa)) enclose the GMPS ATP-PPase domain. 230–236 (SGGVDSS) is a binding site for ATP.

As to quaternary structure, homodimer.

The enzyme catalyses XMP + L-glutamine + ATP + H2O = GMP + L-glutamate + AMP + diphosphate + 2 H(+). Its pathway is purine metabolism; GMP biosynthesis; GMP from XMP (L-Gln route): step 1/1. Catalyzes the synthesis of GMP from XMP. This is GMP synthase [glutamine-hydrolyzing] from Burkholderia ambifaria (strain MC40-6).